Consider the following 734-residue polypeptide: Photosystem I P700 chlorophyll a apoprotein A2 (734 aa).

8 helical membrane-spanning segments follow: residues Ile46 to Ala69, Leu135 to Gln158, Leu175 to Ile199, Met273 to Tyr291, Ile330 to Tyr353, Ala369 to Ile395, Ala417 to His439, and Phe517 to Val535. Residues Cys559 and Cys568 each contribute to the [4Fe-4S] cluster site. Transmembrane regions (helical) follow at residues Ala575–Trp596 and Leu643–Ile665. Chlorophyll a contacts are provided by His654, Met662, and Tyr670. Trp671 lines the phylloquinone pocket. The helical transmembrane segment at Leu707 to Ala727 threads the bilayer.

This sequence belongs to the PsaA/PsaB family. In terms of assembly, the PsaA/B heterodimer binds the P700 chlorophyll special pair and subsequent electron acceptors. PSI consists of a core antenna complex that captures photons, and an electron transfer chain that converts photonic excitation into a charge separation. The eukaryotic PSI reaction center is composed of at least 11 subunits. It depends on P700 is a chlorophyll a/chlorophyll a' dimer, A0 is one or more chlorophyll a, A1 is one or both phylloquinones and FX is a shared 4Fe-4S iron-sulfur center. as a cofactor.

It localises to the plastid. The protein localises to the chloroplast thylakoid membrane. The enzyme catalyses reduced [plastocyanin] + hnu + oxidized [2Fe-2S]-[ferredoxin] = oxidized [plastocyanin] + reduced [2Fe-2S]-[ferredoxin]. Functionally, psaA and PsaB bind P700, the primary electron donor of photosystem I (PSI), as well as the electron acceptors A0, A1 and FX. PSI is a plastocyanin-ferredoxin oxidoreductase, converting photonic excitation into a charge separation, which transfers an electron from the donor P700 chlorophyll pair to the spectroscopically characterized acceptors A0, A1, FX, FA and FB in turn. Oxidized P700 is reduced on the lumenal side of the thylakoid membrane by plastocyanin. This is Photosystem I P700 chlorophyll a apoprotein A2 from Lotus japonicus (Lotus corniculatus var. japonicus).